Consider the following 3080-residue polypeptide: Protein PIEZO homolog (3080 aa).

A run of 6 helical transmembrane segments spans residues 28–48 (YIYFIFFLLSILCLPHKSLIL), 57–77 (PIITLVLSMFSLILQLLVNVV), 86–106 (LSVNILTAFGFYKYNSFWIVF), 113–133 (VIVFVISLFTIILWFKNLVYP), 204–224 (YPSIINVIYFVFTILIILLLA), and 232–252 (VMLKCYPILLITSLCHLLFVY). A glycan (N-linked (GlcNAc...) asparagine) is linked at asparagine 276. The chain crosses the membrane as a helical span at residues 285–305 (WPLVIGYITVLLLYISTCILF). Asparagine 312 and asparagine 339 each carry an N-linked (GlcNAc...) asparagine glycan. A run of 2 helical transmembrane segments spans residues 362-382 (ILVVCFFLTASVASAILLASG) and 396-416 (VIYIILLYFLVFISAQYIFNI). N-linked (GlcNAc...) asparagine glycosylation occurs at asparagine 434. The helical transmembrane segment at 438 to 458 (WLYIGVQIVVSLTLSLYCFYS) threads the bilayer. A disordered region spans residues 469 to 548 (KKDQQSQQSQ…GGGIIRPRKP (80 aa)). Over residues 473–505 (QSQQSQPQPQQQQQQQQSSQNNQIQQSPLQYQQ) the composition is skewed to low complexity. A compositionally biased stretch (polar residues) spans 512–532 (ISNKSLPSSPMSTKSTTVHIQ). Asparagine 514, asparagine 567, and asparagine 606 each carry an N-linked (GlcNAc...) asparagine glycan. 3 helical membrane passes run 672-692 (GLTSINLLNAGYMLFFIVFVI), 700-720 (FWMCLIIYAQMVLLTLYIWQL), and 740-760 (YGSPLWVGLIWHIIIITFSII). Asparagine 795 is a glycosylation site (N-linked (GlcNAc...) asparagine). 3 consecutive transmembrane segments (helical) span residues 827–847 (FCYLVIVIVSIFTKISLINIV), 849–869 (MATVFLCLLIHHISANGSIHI), and 872–892 (FWIIIILSQGVVLVARYIMQF). A glycan (N-linked (GlcNAc...) asparagine) is linked at asparagine 918. The chain crosses the membrane as a helical span at residues 928–948 (LFGCSSILVVCVFQLTVFFSI). N-linked (GlcNAc...) asparagine glycosylation occurs at asparagine 992. Helical transmembrane passes span 1036–1056 (FAISIAEYNFFNFIYLIMIVI) and 1067–1087 (IGSFLLFYSQLWVLTQLAALL). N-linked (GlcNAc...) asparagine glycosylation is present at asparagine 1109. Residues 1158–1185 (QQQRKLEEHEEEYEEEEDQFGNKKNNDK) form a disordered region. Residues 1166–1176 (HEEEYEEEEDQ) show a composition bias toward acidic residues. 3 N-linked (GlcNAc...) asparagine glycosylation sites follow: asparagine 1191, asparagine 1240, and asparagine 1251. Positions 1199-1253 (DDGNNNNNNNNNNNNNNNNNNNNNNNNNNNNNNNNNNNNNNNQSNNENNENNNNS) are disordered. Residues 1202–1252 (NNNNNNNNNNNNNNNNNNNNNNNNNNNNNNNNNNNNNNNQSNNENNENNNN) are compositionally biased toward low complexity. A run of 3 helical transmembrane segments spans residues 1281–1301 (VLAFALFWRLNILGMIYLIII), 1316–1336 (IYVSALLAPTILIQYLLILVV), and 1360–1380 (LLLLSIPDRYVLVIDFLVLFF). 2 N-linked (GlcNAc...) asparagine glycosylation sites follow: asparagine 1424 and asparagine 1440. A run of 2 helical transmembrane segments spans residues 1472–1492 (VILIVIFLAGTAECDILSCFY) and 1519–1539 (IYNWLVLMAQIIFQVAVILYF). Asparagine 1559 and asparagine 1589 each carry an N-linked (GlcNAc...) asparagine glycan. Residues 1619-1639 (IETGPLSISTISDVIIMVLLA) form a helical membrane-spanning segment. The span at 1704 to 1714 (RINRRKNRHNH) shows a compositional bias: basic residues. Residues 1704 to 1812 (RINRRKNRHN…NPLSNSSSTV (109 aa)) are disordered. Residues 1715–1742 (YYNNNPNNNYNNNNNNNNSNSSNSNNNN) show a composition bias toward low complexity. Residues asparagine 1731, asparagine 1734, asparagine 1763, asparagine 1768, asparagine 1771, asparagine 1779, asparagine 1807, and asparagine 1864 are each glycosylated (N-linked (GlcNAc...) asparagine). A compositionally biased stretch (polar residues) spans 1762–1782 (KNTTNQNATNSTYSPFANSTM). A compositionally biased stretch (low complexity) spans 1789-1812 (NNNNNNNNNNNFNNNPLSNSSSTV). Disordered regions lie at residues 1873–1899 (LQQEQQQQQEQQQQLNPQQQQSQSSKE) and 1958–2032 (SQLL…TSSS). Positions 1958 to 2021 (SQLLQQQQQQ…NNNNNNNNNN (64 aa)) are enriched in low complexity. Residue asparagine 2027 is glycosylated (N-linked (GlcNAc...) asparagine). Transmembrane regions (helical) follow at residues 2078–2098 (IANGVFYNSIISLVYLLAVFL) and 2112–2132 (FWRFMIGYSSLIICLKYVFQI). Asparagine 2148 is a glycosylation site (N-linked (GlcNAc...) asparagine). A helical transmembrane segment spans residues 2199–2219 (VFGLYIIDGHFISGAFWDLAI). Positions 2277–2367 (LNNSPISLNS…NNNNNNNNNN (91 aa)) are disordered. Residue asparagine 2285 is glycosylated (N-linked (GlcNAc...) asparagine). Positions 2288–2367 (NNNNNNNNNN…NNNNNNNNNN (80 aa)) are enriched in low complexity. 2 helical membrane passes run 2427 to 2447 (IIIYPFKWLFVSIIEYVWLAI) and 2457 to 2477 (YYMPLLFTDFACLFFLVIFPQ). The N-linked (GlcNAc...) asparagine glycan is linked to asparagine 2478. Helical transmembrane passes span 2500-2520 (YIVILLAQFGVIILDRIIYLY), 2530-2550 (QIVLTVLYHVFLFFYFPDLIV), 2553-2573 (FSFGYTWPLVVFYLMKCIYLY), and 2671-2691 (FVTGVTFFIGLVILLWFPLII). N-linked (GlcNAc...) asparagine glycosylation is found at asparagine 2762, asparagine 2790, asparagine 2837, asparagine 2840, asparagine 2848, asparagine 2858, asparagine 2908, asparagine 2913, and asparagine 2935. The interval 2835–2863 (QSNNSNNSNNPNENSSSGSDDNNNNSNNN) is disordered. Positions 2836 to 2863 (SNNSNNSNNPNENSSSGSDDNNNNSNNN) are enriched in low complexity. A helical transmembrane segment spans residues 2955–2975 (ITSTLVSAGIIGLYVSVVLSV). The interval 3054–3080 (PTINSTLNNQNNQNNNNNNNNNHEKIN) is disordered. Residue asparagine 3057 is glycosylated (N-linked (GlcNAc...) asparagine). A compositionally biased stretch (low complexity) spans 3061–3074 (NNQNNQNNNNNNNN).

This sequence belongs to the PIEZO (TC 1.A.75) family.

It localises to the membrane. The polypeptide is Protein PIEZO homolog (Dictyostelium discoideum (Social amoeba)).